A 300-amino-acid chain; its full sequence is U6 snRNA methylphosphate capping enzyme Amus (300 aa).

A compositionally biased stretch (polar residues) spans 1–12; sequence MDLENNNNTPLT. 2 disordered regions span residues 1–21 and 34–68; these read MDLENNNNTPLTGKQAEKCAK and VESKRLKKEESNVEATSRPPAQSPKKRLHLNGKPM. Over residues 34 to 44 the composition is skewed to basic and acidic residues; it reads VESKRLKKEES. One can recognise a Bin3-type SAM domain in the interval 95-300; the sequence is DIRLDVLGTQ…KRPIQIFTKS (206 aa). S-adenosyl-L-methionine contacts are provided by Asn-119 and Asp-140.

The protein belongs to the methyltransferase superfamily.

It localises to the nucleus. Functionally, probable S-adenosyl-L-methionine-dependent methyltransferase that binds and stabilizes U6 snRNA, probably by adding a methylphosphate cap at its 5'-end. Required for U6 stability, but not stability of 7SK snRNAs, other miRNAs or tRNAs. U6 stabilization is required for efficient pre-mRNA splicing. Essential for organismal and germline development. This Drosophila melanogaster (Fruit fly) protein is U6 snRNA methylphosphate capping enzyme Amus.